The following is a 222-amino-acid chain: Octanoyltransferase (222 aa).

A BPL/LPL catalytic domain is found at 35–214 (GTAPELIWLL…HLDGFLARLD (180 aa)). Residues 73–80 (RGGRYTYH), 145–147 (AIG), and 158–160 (GFS) each bind substrate. The Acyl-thioester intermediate role is filled by cysteine 176.

It belongs to the LipB family.

The protein resides in the cytoplasm. The catalysed reaction is octanoyl-[ACP] + L-lysyl-[protein] = N(6)-octanoyl-L-lysyl-[protein] + holo-[ACP] + H(+). It functions in the pathway protein modification; protein lipoylation via endogenous pathway; protein N(6)-(lipoyl)lysine from octanoyl-[acyl-carrier-protein]: step 1/2. Its function is as follows. Catalyzes the transfer of endogenously produced octanoic acid from octanoyl-acyl-carrier-protein onto the lipoyl domains of lipoate-dependent enzymes. Lipoyl-ACP can also act as a substrate although octanoyl-ACP is likely to be the physiological substrate. This is Octanoyltransferase from Novosphingobium aromaticivorans (strain ATCC 700278 / DSM 12444 / CCUG 56034 / CIP 105152 / NBRC 16084 / F199).